Here is a 117-residue protein sequence, read N- to C-terminus: Large ribosomal subunit protein uL18 (117 aa).

It belongs to the universal ribosomal protein uL18 family. In terms of assembly, part of the 50S ribosomal subunit; part of the 5S rRNA/L5/L18/L25 subcomplex. Contacts the 5S and 23S rRNAs.

Functionally, this is one of the proteins that bind and probably mediate the attachment of the 5S RNA into the large ribosomal subunit, where it forms part of the central protuberance. The polypeptide is Large ribosomal subunit protein uL18 (Francisella philomiragia subsp. philomiragia (strain ATCC 25017 / CCUG 19701 / FSC 153 / O#319-036)).